An 86-amino-acid chain; its full sequence is Large ribosomal subunit protein uL23 (86 aa).

This sequence belongs to the universal ribosomal protein uL23 family. As to quaternary structure, part of the 50S ribosomal subunit. Contacts protein L29.

Functionally, binds to 23S rRNA. One of the proteins that surrounds the polypeptide exit tunnel on the outside of the ribosome. The chain is Large ribosomal subunit protein uL23 from Methanococcus vannielii (strain ATCC 35089 / DSM 1224 / JCM 13029 / OCM 148 / SB).